Here is a 179-residue protein sequence, read N- to C-terminus: Large ribosomal subunit protein uL5 (179 aa).

The protein belongs to the universal ribosomal protein uL5 family. As to quaternary structure, part of the 50S ribosomal subunit; part of the 5S rRNA/L5/L18/L25 subcomplex. Contacts the 5S rRNA and the P site tRNA. Forms a bridge to the 30S subunit in the 70S ribosome.

This is one of the proteins that bind and probably mediate the attachment of the 5S RNA into the large ribosomal subunit, where it forms part of the central protuberance. In the 70S ribosome it contacts protein S13 of the 30S subunit (bridge B1b), connecting the 2 subunits; this bridge is implicated in subunit movement. Contacts the P site tRNA; the 5S rRNA and some of its associated proteins might help stabilize positioning of ribosome-bound tRNAs. In Prochlorococcus marinus (strain NATL1A), this protein is Large ribosomal subunit protein uL5.